Reading from the N-terminus, the 427-residue chain is Enolase (427 aa).

Gln163 serves as a coordination point for (2R)-2-phosphoglycerate. Glu205 acts as the Proton donor in catalysis. Mg(2+) contacts are provided by Asp242, Glu285, and Asp312. (2R)-2-phosphoglycerate-binding residues include Lys337, Arg366, Ser367, and Lys388. Lys337 (proton acceptor) is an active-site residue.

It belongs to the enolase family. Requires Mg(2+) as cofactor.

The protein resides in the cytoplasm. The protein localises to the secreted. It localises to the cell surface. It carries out the reaction (2R)-2-phosphoglycerate = phosphoenolpyruvate + H2O. The protein operates within carbohydrate degradation; glycolysis; pyruvate from D-glyceraldehyde 3-phosphate: step 4/5. Its function is as follows. Catalyzes the reversible conversion of 2-phosphoglycerate (2-PG) into phosphoenolpyruvate (PEP). It is essential for the degradation of carbohydrates via glycolysis. The sequence is that of Enolase from Laribacter hongkongensis (strain HLHK9).